The chain runs to 148 residues: Nucleoside diphosphate kinase (148 aa).

K9, F57, R85, T91, R102, and N112 together coordinate ATP. Position 91 is a phosphothreonine (T91). The Pros-phosphohistidine intermediate role is filled by H115. A Phosphoserine modification is found at S122.

This sequence belongs to the NDK family. Homotetramer. Requires Mg(2+) as cofactor.

Its subcellular location is the cytoplasm. It carries out the reaction a 2'-deoxyribonucleoside 5'-diphosphate + ATP = a 2'-deoxyribonucleoside 5'-triphosphate + ADP. The catalysed reaction is a ribonucleoside 5'-diphosphate + ATP = a ribonucleoside 5'-triphosphate + ADP. Major role in the synthesis of nucleoside triphosphates other than ATP. The ATP gamma phosphate is transferred to the NDP beta phosphate via a ping-pong mechanism, using a phosphorylated active-site intermediate. This Bacillus cereus (strain ATCC 10987 / NRS 248) protein is Nucleoside diphosphate kinase.